An 89-amino-acid polypeptide reads, in one-letter code: Small ribosomal subunit protein uS15 (89 aa).

Over residues 1–18 (MALSAQEKDAIVKEHQTS) the composition is skewed to basic and acidic residues. The tract at residues 1–25 (MALSAQEKDAIVKEHQTSETDTGSP) is disordered.

This sequence belongs to the universal ribosomal protein uS15 family. As to quaternary structure, part of the 30S ribosomal subunit. Forms a bridge to the 50S subunit in the 70S ribosome, contacting the 23S rRNA.

One of the primary rRNA binding proteins, it binds directly to 16S rRNA where it helps nucleate assembly of the platform of the 30S subunit by binding and bridging several RNA helices of the 16S rRNA. Its function is as follows. Forms an intersubunit bridge (bridge B4) with the 23S rRNA of the 50S subunit in the ribosome. This chain is Small ribosomal subunit protein uS15, found in Teredinibacter turnerae (strain ATCC 39867 / T7901).